A 1111-amino-acid polypeptide reads, in one-letter code: Probable arabinosyltransferase A (1111 aa).

A run of 13 helical transmembrane segments spans residues 12 to 34, 205 to 224, 333 to 355, 370 to 387, 394 to 413, 423 to 445, 462 to 484, 530 to 547, 554 to 576, 581 to 603, 615 to 637, 652 to 674, and 695 to 717; these read IIRL…VPLL, IAVG…LSAL, VWMR…HWVL, VAVL…LPFN, PLIA…AIAL, AVVA…ALLT, GLLA…VFHS, FPVL…VVLL, GLAS…LLTF, WAIQ…AFAF, TVYI…GWFG, IAGH…LAGG, and FLAT…GSLA. A disordered region spans residues 804–831; sequence GLVNSDASPNKPNVTFSDSAGTAGGKGP. Over residues 808–823 the composition is skewed to polar residues; the sequence is SDASPNKPNVTFSDSA.

It belongs to the emb family.

Its subcellular location is the cell membrane. Arabinosyl transferase responsible for the polymerization of arabinose into the arabinan of arabinogalactan. The sequence is that of Probable arabinosyltransferase A (embA) from Mycobacterium leprae (strain TN).